The chain runs to 243 residues: Orotidine 5'-phosphate decarboxylase (243 aa).

Residues Asp-16, Lys-38, 65-74 (DLKLHDIPNT), Thr-120, Arg-181, Gln-190, Gly-210, and Arg-211 each bind substrate. Lys-67 acts as the Proton donor in catalysis.

Belongs to the OMP decarboxylase family. Type 1 subfamily. Homodimer.

It catalyses the reaction orotidine 5'-phosphate + H(+) = UMP + CO2. It functions in the pathway pyrimidine metabolism; UMP biosynthesis via de novo pathway; UMP from orotate: step 2/2. In terms of biological role, catalyzes the decarboxylation of orotidine 5'-monophosphate (OMP) to uridine 5'-monophosphate (UMP). The protein is Orotidine 5'-phosphate decarboxylase of Bradyrhizobium sp. (strain ORS 278).